The sequence spans 645 residues: MTPPLIELEGIRRSYRSGDVVTHALRGVGLSIHAGEFVAIIGASGSGKSTLMNIIGLMDRPSDGAYRFGGRDVATLNRDELAALRRGCFGFIFQNYHLIPTVSALGNVEMPAIHAGAPRAYRHRRATALLTRLGLANRITNRPSQLSGGQQQRVSIARALMNGGAVILADEPTGALDSKSGTEVLGILKKLAGDGHTVILITHDSKVAAAAERIIRIEDGLIVSDSGPDPEKVSSSIAVVPWQASDSSPPLWTWLEEAARSAFAALAINPVRTALTLSGIVIGVASVVAMMAIGRGAQASYIERASAIGTNWIVVDRAGESTGNSLPLTPADAQAIKDMDNVSGSMPAMWDMATMRRGNIDLNTDVVATTAEFRTVHNWDMAKGTFFTKQDEVSGGPVVLLGATLASKLFPGIADPSGSNILINNLPFLVTGVLESKGLSERGTDRDKRAVMPLRTATMRLFGKDDLSEIVVSIADMSRLHETKEAIKALLIRRHGREDFYIYDSASAFQKAEDERRSSNLLLSAIAAISMLVGGIGIMNIMLITVSERTREIGVRTAIGARTADILGQFLTEAVVLAAIGGVVGLLLGAVIGVGAALLFGMTVIFSVTMALGALMGAVVMGTVFGFMPAYRAARLKPIEALARG.

The 239-residue stretch at 6–244 (IELEGIRRSY…SSIAVVPWQA (239 aa)) folds into the ABC transporter domain. 42-49 (GASGSGKS) contributes to the ATP binding site. 4 helical membrane passes run 274–294 (ALTL…MAIG), 526–546 (IAAI…LITV), 574–594 (AVVL…VIGV), and 596–616 (AALL…GALM).

The protein belongs to the ABC transporter superfamily. Macrolide exporter (TC 3.A.1.122) family. Homodimer.

The protein localises to the cell inner membrane. In terms of biological role, non-canonical ABC transporter that contains transmembrane domains (TMD), which form a pore in the inner membrane, and an ATP-binding domain (NBD), which is responsible for energy generation. Confers resistance against macrolides. This Nitrobacter winogradskyi (strain ATCC 25391 / DSM 10237 / CIP 104748 / NCIMB 11846 / Nb-255) protein is Macrolide export ATP-binding/permease protein MacB.